A 332-amino-acid chain; its full sequence is Ferredoxin--NADP reductase (332 aa).

Glu36, Gln44, Tyr49, Val91, Phe124, and Thr327 together coordinate FAD.

This sequence belongs to the ferredoxin--NADP reductase type 2 family. Homodimer. The cofactor is FAD.

The enzyme catalyses 2 reduced [2Fe-2S]-[ferredoxin] + NADP(+) + H(+) = 2 oxidized [2Fe-2S]-[ferredoxin] + NADPH. This Streptococcus thermophilus (strain CNRZ 1066) protein is Ferredoxin--NADP reductase.